The sequence spans 94 residues: Small ribosomal subunit protein uS19 (94 aa).

This sequence belongs to the universal ribosomal protein uS19 family.

Protein S19 forms a complex with S13 that binds strongly to the 16S ribosomal RNA. This Nitrosomonas eutropha (strain DSM 101675 / C91 / Nm57) protein is Small ribosomal subunit protein uS19.